A 204-amino-acid polypeptide reads, in one-letter code: Urease accessory protein UreG (204 aa).

11–18 (GPVGAGKT) serves as a coordination point for GTP.

Belongs to the SIMIBI class G3E GTPase family. UreG subfamily. As to quaternary structure, homodimer. UreD, UreF and UreG form a complex that acts as a GTP-hydrolysis-dependent molecular chaperone, activating the urease apoprotein by helping to assemble the nickel containing metallocenter of UreC. The UreE protein probably delivers the nickel.

The protein localises to the cytoplasm. Facilitates the functional incorporation of the urease nickel metallocenter. This process requires GTP hydrolysis, probably effectuated by UreG. The chain is Urease accessory protein UreG from Staphylococcus epidermidis (strain ATCC 12228 / FDA PCI 1200).